A 316-amino-acid chain; its full sequence is Calumenin-B (316 aa).

The signal sequence occupies residues 1 to 19 (MELRPLVMCFALCVVYASS). EF-hand domains follow at residues 69 to 104 (ESKERLGMLVERIDEDKDGYVSVEEMKKWIKHSQKR), 105 to 140 (WIYDDVDRQWKGHDHNGDGLVSWEEYKNATYGYILD), 152 to 187 (QMISRDERRFKMSDLDADLKANKEEFTAFLHPEEYD), 189 to 224 (MKDIVVLETMEDIDKNGDGFIDLEEYIGDMYNQEGD), 230 to 265 (WVRTEREQFTEFRDTNKDGRMDKEETKDWILPSDYD), and 266 to 301 (HAEAEAKHLVYESDNDKDGKLTKAEIVEKYDLFVGS). Residues Asp82, Asp84, Asp86, Tyr88, Glu93, Asp118, Asn120, Asp122, and Glu129 each contribute to the Ca(2+) site. Residue Asn132 is glycosylated (N-linked (GlcNAc...) asparagine). Residues Asp165, Asp167, Asp169, Lys171, Glu176, Asp202, Asn204, Asp206, Glu213, Asp243, Asn245, Asp247, Arg249, Glu254, Asp279, Asp281, Asp283, Lys285, and Glu290 each contribute to the Ca(2+) site. A Prevents secretion from ER motif is present at residues 313 to 316 (HDEF).

Belongs to the CREC family. As to quaternary structure, interacts with ggcx.

It is found in the endoplasmic reticulum membrane. Its subcellular location is the golgi apparatus. It localises to the secreted. The protein localises to the melanosome. The protein resides in the sarcoplasmic reticulum lumen. In terms of biological role, involved in regulation of vitamin K-dependent carboxylation of multiple N-terminal glutamate residues. Seems to inhibit gamma-carboxylase ggcx. Binds 7 calcium ions with a low affinity. The polypeptide is Calumenin-B (calub) (Salmo salar (Atlantic salmon)).